Here is a 68-residue protein sequence, read N- to C-terminus: TxMMSK-03 (68 aa).

The signal sequence occupies residues 1 to 19 (MSKLGALLIICLLLFPLTA). The propeptide occupies 20-50 (VPMDGDQPADRPAERMQDDISFEQHPMFDAT). 3 cysteine pairs are disulfide-bonded: cysteine 53–cysteine 67, cysteine 54–cysteine 63, and cysteine 59–cysteine 66. Proline 65 is modified (4-hydroxyproline; partial).

In terms of processing, contains 3 disulfide bonds. In terms of tissue distribution, expressed by the venom duct. Both hydroxylated and non-hydroxylated forms are mostly and only present in part 2 (proximal of the venom bulb) of the venom duct, respectively.

It is found in the secreted. The polypeptide is TxMMSK-03 (Conus textile (Cloth-of-gold cone)).